The chain runs to 124 residues: MPTINQLIRHGRKRLKKKSKSPALENNPQKRGVCVRVSTMTPKKPNSALRKIARVRLSNGTEVTAYIPGEGHNLQEHSVVLVRGGRVKDLPGVRYKIIRGALDAEGVANRRQSRSRYGAKKPKK.

Positions 11–20 are enriched in basic residues; the sequence is GRKRLKKKSK. Residues 11–30 form a disordered region; sequence GRKRLKKKSKSPALENNPQK. At aspartate 89 the chain carries 3-methylthioaspartic acid. The segment at 105–124 is disordered; the sequence is EGVANRRQSRSRYGAKKPKK. The segment covering 111-124 has biased composition (basic residues); it reads RQSRSRYGAKKPKK.

The protein belongs to the universal ribosomal protein uS12 family. In terms of assembly, part of the 30S ribosomal subunit. Contacts proteins S8 and S17. May interact with IF1 in the 30S initiation complex.

Functionally, with S4 and S5 plays an important role in translational accuracy. Interacts with and stabilizes bases of the 16S rRNA that are involved in tRNA selection in the A site and with the mRNA backbone. Located at the interface of the 30S and 50S subunits, it traverses the body of the 30S subunit contacting proteins on the other side and probably holding the rRNA structure together. The combined cluster of proteins S8, S12 and S17 appears to hold together the shoulder and platform of the 30S subunit. The protein is Small ribosomal subunit protein uS12 of Kosmotoga olearia (strain ATCC BAA-1733 / DSM 21960 / TBF 19.5.1).